The chain runs to 174 residues: RxLR effector protein 207 (174 aa).

The signal sequence occupies residues 1-20 (MSKVFLLLVLSVFALVSCDA). Positions 46 to 62 (RMLRAQEEPTNAADEER) match the RxLR-dEER motif. The segment at 82 to 99 (VTNSKLVQSMNNKLASLT) is disordered.

The protein belongs to the RxLR effector family. In terms of assembly, interacts with Nicotiana benthamiana ACD11, BPA1 (binding partner of ACD11), as well as BPA-like proteins BPL1, BPL2, BPL3 and BPL4.

It is found in the secreted. The protein resides in the host cell membrane. Its function is as follows. Secreted effector that activates ROS-mediated cell death in plant host and is essential for virulence. Plays a role in the transition from the biotrophic to necrotrophic stage. Associates with and promotes the degradation of Nicotiana benthamiana BPA1, BPL1, BPL2, and BPL4 to disrupt ACD11 stabilization in a 26S proteasome-dependent manner. This is RxLR effector protein 207 from Phytophthora capsici.